Consider the following 104-residue polypeptide: Histone H4 (104 aa).

The disordered stretch occupies residues 1-21; that stretch reads MAGRGKVGKGYGKVGAKRHTK.

It belongs to the histone H4 family. In terms of assembly, the nucleosome is a histone octamer containing two molecules each of H2A, H2B, H3 and H4 assembled in one H3-H4 heterotetramer and two H2A-H2B heterodimers. The octamer wraps approximately 147 bp of DNA.

The protein localises to the nucleus. The protein resides in the chromosome. Its function is as follows. Core component of nucleosome. Nucleosomes wrap and compact DNA into chromatin, limiting DNA accessibility to the cellular machineries which require DNA as a template. Histones thereby play a central role in transcription regulation, DNA repair, DNA replication and chromosomal stability. DNA accessibility is regulated via a complex set of post-translational modifications of histones, also called histone code, and nucleosome remodeling. This chain is Histone H4, found in Sterkiella nova (Ciliate).